Reading from the N-terminus, the 124-residue chain is Small ribosomal subunit protein uS12 (124 aa).

Asp89 carries the 3-methylthioaspartic acid modification. The tract at residues 105–124 (QGVKNRKQARSRYGAKKEKS) is disordered. Positions 108–118 (KNRKQARSRYG) are enriched in basic residues.

It belongs to the universal ribosomal protein uS12 family. As to quaternary structure, part of the 30S ribosomal subunit. Contacts proteins S8 and S17. May interact with IF1 in the 30S initiation complex.

Its function is as follows. With S4 and S5 plays an important role in translational accuracy. Functionally, interacts with and stabilizes bases of the 16S rRNA that are involved in tRNA selection in the A site and with the mRNA backbone. Located at the interface of the 30S and 50S subunits, it traverses the body of the 30S subunit contacting proteins on the other side and probably holding the rRNA structure together. The combined cluster of proteins S8, S12 and S17 appears to hold together the shoulder and platform of the 30S subunit. This chain is Small ribosomal subunit protein uS12, found in Mycobacterium sp. (strain JLS).